Consider the following 314-residue polypeptide: tRNA dimethylallyltransferase (314 aa).

12 to 19 provides a ligand contact to ATP; that stretch reads GPTASGKT. A substrate-binding site is contributed by 14–19; sequence TASGKT. Interaction with substrate tRNA regions lie at residues 37 to 40, 161 to 165, and 244 to 249; these read DSAL, QRIQR, and RCVGYR.

This sequence belongs to the IPP transferase family. As to quaternary structure, monomer. Requires Mg(2+) as cofactor.

It catalyses the reaction adenosine(37) in tRNA + dimethylallyl diphosphate = N(6)-dimethylallyladenosine(37) in tRNA + diphosphate. In terms of biological role, catalyzes the transfer of a dimethylallyl group onto the adenine at position 37 in tRNAs that read codons beginning with uridine, leading to the formation of N6-(dimethylallyl)adenosine (i(6)A). In Janthinobacterium sp. (strain Marseille) (Minibacterium massiliensis), this protein is tRNA dimethylallyltransferase.